A 303-amino-acid chain; its full sequence is MLKQRTLKNPIRATGVGLHTGKPIQLTLLPAPADFGIVFRRVDLNPPVEIPANPYNVGETTLSTCLIKGDVRVSTVEHLMSAMAGLGVDNAVIELDSAEIPIMDGSAGPFVFLIQSAGVLEQDAPKKFLRVKKEVTLRDGDKYASFTPFDGFKVNFSIEFDHPVFRDRRPQTEVEFSTASFVKEVSRARTFGFMHEIEYLRSKGLAQGGSMANAIVVGEYRILNEDGLRFEDEFVKHKILDAIGDLYMLGHGLLADFRAHKSGHSLNNRALRLLLEQKDAWEWVTFEDEQPVPIDYLRPLAVA.

Positions 78, 237, and 241 each coordinate Zn(2+). The active-site Proton donor is histidine 264.

Belongs to the LpxC family. Zn(2+) is required as a cofactor.

It carries out the reaction a UDP-3-O-[(3R)-3-hydroxyacyl]-N-acetyl-alpha-D-glucosamine + H2O = a UDP-3-O-[(3R)-3-hydroxyacyl]-alpha-D-glucosamine + acetate. It functions in the pathway glycolipid biosynthesis; lipid IV(A) biosynthesis; lipid IV(A) from (3R)-3-hydroxytetradecanoyl-[acyl-carrier-protein] and UDP-N-acetyl-alpha-D-glucosamine: step 2/6. Catalyzes the hydrolysis of UDP-3-O-myristoyl-N-acetylglucosamine to form UDP-3-O-myristoylglucosamine and acetate, the committed step in lipid A biosynthesis. The chain is UDP-3-O-acyl-N-acetylglucosamine deacetylase from Cellvibrio japonicus (strain Ueda107) (Pseudomonas fluorescens subsp. cellulosa).